A 788-amino-acid chain; its full sequence is MMDNEVLDFDIGVGVSSGGDVDDDAIDIEHHALDDDDMLDSPIMPCGNGLVGNSGNYFPNQEEEACDLLDLEPYDGLEFESEEAAKAFYNSYARRIGFSTRVSSSRRSRRDGAIIQRQFVCAKEGFRNMNEKRTKDREIKRPRTITRVGCKASLSVKMQDSGKWLVSGFVKDHNHELVPPDQVHCLRSHRQISGPAKTLIDTLQAAGMGPRRIMSALIKEYGGISKVGFTEVDCRNYMRNNRQKSIEGEIQLLLDYLRQMNADNPNFFYSVQGSEDQSVGNVFWADPKAIMDFTHFGDTVTFDTTYRSNRYRLPFAPFTGVNHHGQPILFGCAFIINETEASFVWLFNTWLAAMSAHPPVSITTDHDAVIRAAIMHVFPGARHRFCKWHILKKCQEKLSHVFLKHPSFESDFHKCVNLTESVEDFERCWFSLLDKYELRDHEWLQAIYSDRRQWVPVYLRDTFFADMSLTHRSDSINSYFDGYINASTNLSQFFKLYEKALESRLEKEVKADYDTMNSPPVLKTPSPMEKQASELYTRKLFMRFQEELVGTLTFMASKADDDGDLVTYQVAKYGEAHKAHFVKFNVLEMRANCSCQMFEFSGIICRHILAVFRVTNLLTLPPYYILKRWTRNAKSSVIFDDYNLHAYANYLESHTVRYNTLRHKASNFVQEAGKSLYTCDVAVVALQEAAKTVSLAMNKEVRRTMANRHFKASSVTGGKHQQEVLAQPEPEDEMDKKINQLRNELELANRKCEAYRTNLLSVLKEMEDQKLQVSIKVQNIKISLKDNL.

In terms of domain architecture, FAR1 spans 87-179; sequence AFYNSYARRI…VKDHNHELVP (93 aa). Residues 299 to 395 enclose the MULE domain; the sequence is TVTFDTTYRS…CKWHILKKCQ (97 aa). An SWIM-type zinc finger spans residues 584-616; sequence FNVLEMRANCSCQMFEFSGIICRHILAVFRVTN. Residues 713–733 form a disordered region; the sequence is SSVTGGKHQQEVLAQPEPEDE. Residues 731–768 adopt a coiled-coil conformation; it reads EDEMDKKINQLRNELELANRKCEAYRTNLLSVLKEMED.

The protein belongs to the FHY3/FAR1 family. Expressed in hypocotyls, rosette and cauline leaves, inflorescences stems, flowers and siliques.

It localises to the nucleus. Functionally, putative transcription activator involved in regulating light control of development. The protein is Protein FAR1-RELATED SEQUENCE 5 (FRS5) of Arabidopsis thaliana (Mouse-ear cress).